We begin with the raw amino-acid sequence, 910 residues long: Protein translocase subunit SecA (910 aa).

ATP-binding positions include Gln87, 105–109 (GEGKT), and Asp508. The segment covering 558–568 (RHESRRIDNQL) has biased composition (basic and acidic residues). Disordered regions lie at residues 558–580 (RHESRRIDNQLRGRSGRQGDPGS) and 873–910 (AAQQGIAQVQRDEPKIGRNDPCPCGSGKKYKHCHGQLS). The Zn(2+) site is built by Cys894, Cys896, Cys905, and His906. The segment covering 900-910 (KKYKHCHGQLS) has biased composition (basic residues).

It belongs to the SecA family. As to quaternary structure, monomer and homodimer. Part of the essential Sec protein translocation apparatus which comprises SecA, SecYEG and auxiliary proteins SecDF-YajC and YidC. Zn(2+) serves as cofactor.

It localises to the cell inner membrane. The protein localises to the cytoplasm. The catalysed reaction is ATP + H2O + cellular proteinSide 1 = ADP + phosphate + cellular proteinSide 2.. Part of the Sec protein translocase complex. Interacts with the SecYEG preprotein conducting channel. Has a central role in coupling the hydrolysis of ATP to the transfer of proteins into and across the cell membrane, serving both as a receptor for the preprotein-SecB complex and as an ATP-driven molecular motor driving the stepwise translocation of polypeptide chains across the membrane. The chain is Protein translocase subunit SecA from Stenotrophomonas maltophilia (strain R551-3).